We begin with the raw amino-acid sequence, 324 residues long: Zinc finger C2HC domain-containing protein 1A (324 aa).

A C2HC/C3H-type 1 zinc finger spans residues 15 to 44 (ELLPCKICGRTFFPVALKKHGPICKKTATK). Positions 19, 22, 34, and 38 each coordinate Zn(2+). The tract at residues 43 to 83 (TKKRKTFDSSRQRAEGTDIPTVKPLKPRPEPPKKPSNWRRK) is disordered. Positions 48-58 (TFDSSRQRAEG) are enriched in basic and acidic residues. A C2HC/C3H-type 2 zinc finger spans residues 118–147 (DYIQCPYCQRRFNENAADRHINFCKEQAAR). Zn(2+)-binding residues include Cys122, Cys125, His137, and Cys141. Disordered stretches follow at residues 150–224 (NKGK…LSPS) and 236–259 (NVKP…LTNK). Composition is skewed to low complexity over residues 176 to 187 (SNSPGTASSGSS) and 196 to 215 (GKTV…SSLG). Ser222 is modified (phosphoserine). Thr243 is modified (phosphothreonine). Ser291 is modified (phosphoserine).

It belongs to the ZC2HC1 family. The cofactor is Zn(2+).

In Pongo abelii (Sumatran orangutan), this protein is Zinc finger C2HC domain-containing protein 1A (ZC2HC1A).